We begin with the raw amino-acid sequence, 189 residues long: Elongation factor P (189 aa).

It belongs to the elongation factor P family.

Its subcellular location is the cytoplasm. The protein operates within protein biosynthesis; polypeptide chain elongation. Functionally, involved in peptide bond synthesis. Stimulates efficient translation and peptide-bond synthesis on native or reconstituted 70S ribosomes in vitro. Probably functions indirectly by altering the affinity of the ribosome for aminoacyl-tRNA, thus increasing their reactivity as acceptors for peptidyl transferase. The protein is Elongation factor P of Pseudomonas savastanoi pv. phaseolicola (strain 1448A / Race 6) (Pseudomonas syringae pv. phaseolicola (strain 1448A / Race 6)).